Reading from the N-terminus, the 259-residue chain is DnaJ homolog subfamily C member 9 (259 aa).

In terms of domain architecture, J spans 15-82; sequence DLYQVLGVRR…EQKAVYDEQG (68 aa). Phosphoserine is present on Ser109. The required for histone binding stretch occupies residues 171–248; the sequence is EIPAYSAFVK…EAKYCKPSKG (78 aa).

In terms of assembly, forms a co-chaperone complex with MCM2 and histone H3.3-H4 dimers. Within the complex, interacts (via C-terminus) with MCM2 (via N-terminus); the interaction is histone-dependent. Within the complex, interacts (via C-terminus) with histone H3.3-H4 heterodimers; the interaction is direct. Interacts with histones H4, H3.3, H3.2 and H3.1, but not with CENPA or the testis-specific histone H3.1t. Interacts (via J domain) with HSPA1A, HSPA1B and HSPA8. May interact with TONSL; the interaction seems to be histone-dependent. May interact with HSPA8 and BAG2; the interactions seem to be histone-dependent.

The protein resides in the nucleus. It localises to the cytoplasm. The protein localises to the cell membrane. Its function is as follows. Acts as a dual histone chaperone and heat shock co-chaperone. As a histone chaperone, forms a co-chaperone complex with MCM2 and histone H3-H4 heterodimers; and may thereby assist MCM2 in histone H3-H4 heterodimer recognition and facilitate the assembly of histones into nucleosomes. May also act as a histone co-chaperone together with TONSL. May recruit histone chaperones ASF1A, NASP and SPT2 to histone H3-H4 heterodimers. Also plays a role as co-chaperone of the HSP70 family of molecular chaperone proteins, such as HSPA1A, HSPA1B and HSPA8. As a co-chaperone, may play a role in the recruitment of HSP70-type molecular chaperone machinery to histone H3-H4 substrates, thereby maintaining the histone structural integrity. Exhibits activity to assemble histones onto DNA in vitro. The polypeptide is DnaJ homolog subfamily C member 9 (Dnajc9) (Mus musculus (Mouse)).